Reading from the N-terminus, the 643-residue chain is MPIITLPDGSQRQFDHPVSVLEVAQDIGAGLAKATIAGRVNGERRDACDVIEQDATLEIITAKDEDGLEIIRHSCAHLLGHAIKQLFPDVKMAIGPTIENGFYYDVDLDRSLTQEDIDAIEKRMLELAKTNYDVVKKRVTWQEARDTFEKRGEPYKMAILDENIERTATPALYHHLEYIDMCRGPHVPNMRFCQHFKLQKVAGAYWRGDSKNKMLQRIYGTAWADKKQLAEYLTRLEEAAKRDHRKIGKALDLYHMQEEAPGMVFWHNDGWTIFRELETFVRTKLKQYDYQEVKGPFMMDRVLWEKTGHWQNYADLMFTTQSENREYAIKPMNCPGHVQIFNQGLKSYRDLPIRMAEFGSCHRNEPSGSLHGLMRVRGFTQDDAHIFCTEDQIESEVTSCIKMVYDIYSTFGFTNIAVKLSTRPENRIGSDEMWDRAEAGLAAALAHNGLEYEIQEGEGAFYGPKIEFALRDCLGREWQCGTVQLDFALPGRLDATYVAEDNSRKTPVMIHRAILGSIERFIGIITEEYAGFFPAWLAPTQAVVMNITDSQSDYVQQVVKTLSDAGLRVKADLRNEKVGFKIREHTLRRVPYMLVCGDKEIAEGKVAVRTRKGADLGTFTVEEFAEILKNQVRSRELKLLNEE.

In terms of domain architecture, TGS spans 1-61 (MPIITLPDGS…EQDATLEIIT (61 aa)). The catalytic stretch occupies residues 243–534 (DHRKIGKALD…ITEEYAGFFP (292 aa)). Zn(2+) contacts are provided by cysteine 334, histidine 385, and histidine 511.

The protein belongs to the class-II aminoacyl-tRNA synthetase family. In terms of assembly, homodimer. Zn(2+) is required as a cofactor.

The protein localises to the cytoplasm. It carries out the reaction tRNA(Thr) + L-threonine + ATP = L-threonyl-tRNA(Thr) + AMP + diphosphate + H(+). Its function is as follows. Catalyzes the attachment of threonine to tRNA(Thr) in a two-step reaction: L-threonine is first activated by ATP to form Thr-AMP and then transferred to the acceptor end of tRNA(Thr). Also edits incorrectly charged L-seryl-tRNA(Thr). The chain is Threonine--tRNA ligase from Haemophilus influenzae (strain PittEE).